The sequence spans 732 residues: X-ray repair cross-complementing protein 5 (732 aa).

Residues 9–231 (AVVLCMDVGF…DEIYSFSESL (223 aa)) enclose the VWFA domain. The leucine-zipper stretch occupies residues 138-165 (LSSRFSKSQLDIIIHSLKKCDISLQFFL). At Lys-144 the chain carries N6-acetyllysine. Lys-195 is covalently cross-linked (Glycyl lysine isopeptide (Lys-Gly) (interchain with G-Cter in SUMO2)). Positions 253-452 (IGSNLSIRIA…KYAPTEAQLN (200 aa)) constitute a Ku domain. Residues Ser-255 and Ser-258 each carry the phosphoserine modification. Lys-265 is modified (N6-acetyllysine). Position 318 is a phosphoserine (Ser-318). Lys-332 carries the post-translational modification N6-acetyllysine. Glycyl lysine isopeptide (Lys-Gly) (interchain with G-Cter in SUMO2) cross-links involve residues Lys-532 and Lys-534. The residue at position 535 (Thr-535) is a Phosphothreonine. Residues Lys-566 and Lys-568 each participate in a glycyl lysine isopeptide (Lys-Gly) (interchain with G-Cter in SUMO2) cross-link. Residues Ser-577, Ser-579, and Ser-580 each carry the phosphoserine; by PRKDC modification. Lys-660 and Lys-665 each carry N6-acetyllysine. Glycyl lysine isopeptide (Lys-Gly) (interchain with G-Cter in SUMO2) cross-links involve residues Lys-669 and Lys-688. At Thr-715 the chain carries Phosphothreonine; by PRKDC. The short motif at 720-728 (EEGGDVDDL) is the EEXXXDL motif element.

It belongs to the ku80 family. In terms of assembly, heterodimer composed of XRCC5/Ku80 and XRCC6/Ku70; heterodimerization stabilizes XRCC5 protein. Component of the core long-range non-homologous end joining (NHEJ) complex (also named DNA-PK complex) composed of PRKDC, LIG4, XRCC4, XRCC6/Ku70, XRCC5/Ku86 and NHEJ1/XLF. Additional component of the NHEJ complex includes PAXX. Following autophosphorylation, PRKDC dissociates from DNA, leading to formation of the short-range NHEJ complex, composed of LIG4, XRCC4, XRCC6/Ku70, XRCC5/Ku86 and NHEJ1/XLF. The XRCC5-XRCC6 dimer also associates with NAA15, and this complex displays DNA binding activity towards the osteocalcin FGF response element (OCFRE). In addition, XRCC5 binds to the osteoblast-specific transcription factors MSX2 and RUNX2. Interacts with ELF3. Interacts with APLF (via KBM motif). The XRCC5/XRCC6 dimer associates in a DNA-dependent manner with APEX1. Identified in a complex with DEAF1 and XRCC6. Interacts with NR4A3; the DNA-dependent protein kinase complex DNA-PK phosphorylates and activates NR4A3 and prevents NR4A3 ubiquitinylation and degradation. Interacts with RNF138. Interacts with CYREN isoform 1 (CYREN-1) and isoform 4 (CYREN-2) (via KBM motif). Interacts with WRN (via KBM motif). Interacts (via N-terminus) with HSF1 (via N-terminus); this interaction is direct and prevents XRCC5/XRCC6 heterodimeric binding and non-homologous end joining (NHEJ) repair activities induced by ionizing radiation (IR). Interacts with DHX9; this interaction occurs in a RNA-dependent manner. Part of the HDP-RNP complex composed of at least HEXIM1, PRKDC, XRCC5, XRCC6, paraspeckle proteins (SFPQ, NONO, PSPC1, RBM14, and MATR3) and NEAT1 RNA. Interacts with ERCC6. The XRCC5-XRCC6 dimer associates with ALKBH2. Interacts with TPRN; TPRN interacts with a number of DNA damage response proteins, is recruited to sites of DNA damage and may play a role in DNA damage repair. Interacts with ERCC6L2. As to quaternary structure, (Microbial infection) Interacts with human T-cell leukemia virus 1/HTLV-1 protein HBZ. ADP-ribosylated by PARP3. Post-translationally, phosphorylated on serine residues. Phosphorylation by PRKDC may enhance helicase activity. In terms of processing, sumoylated. Ubiquitinated by RNF8 via 'Lys-48'-linked ubiquitination following DNA damage, leading to its degradation and removal from DNA damage sites. Ubiquitinated by RNF138, leading to remove the Ku complex from DNA breaks.

It localises to the nucleus. It is found in the nucleolus. Its subcellular location is the chromosome. Single-stranded DNA-dependent ATP-dependent helicase that plays a key role in DNA non-homologous end joining (NHEJ) by recruiting DNA-PK to DNA. Required for double-strand break repair and V(D)J recombination. Also has a role in chromosome translocation. The DNA helicase II complex binds preferentially to fork-like ends of double-stranded DNA in a cell cycle-dependent manner. It works in the 3'-5' direction. During NHEJ, the XRCC5-XRRC6 dimer performs the recognition step: it recognizes and binds to the broken ends of the DNA and protects them from further resection. Binding to DNA may be mediated by XRCC6. The XRCC5-XRRC6 dimer acts as a regulatory subunit of the DNA-dependent protein kinase complex DNA-PK by increasing the affinity of the catalytic subunit PRKDC to DNA by 100-fold. The XRCC5-XRRC6 dimer is probably involved in stabilizing broken DNA ends and bringing them together. The assembly of the DNA-PK complex to DNA ends is required for the NHEJ ligation step. The XRCC5-XRRC6 dimer probably also acts as a 5'-deoxyribose-5-phosphate lyase (5'-dRP lyase), by catalyzing the beta-elimination of the 5' deoxyribose-5-phosphate at an abasic site near double-strand breaks. XRCC5 probably acts as the catalytic subunit of 5'-dRP activity, and allows to 'clean' the termini of abasic sites, a class of nucleotide damage commonly associated with strand breaks, before such broken ends can be joined. The XRCC5-XRRC6 dimer together with APEX1 acts as a negative regulator of transcription. In association with NAA15, the XRCC5-XRRC6 dimer binds to the osteocalcin promoter and activates osteocalcin expression. As part of the DNA-PK complex, involved in the early steps of ribosome assembly by promoting the processing of precursor rRNA into mature 18S rRNA in the small-subunit processome. Binding to U3 small nucleolar RNA, recruits PRKDC and XRCC5/Ku86 to the small-subunit processome. Plays a role in the regulation of DNA virus-mediated innate immune response by assembling into the HDP-RNP complex, a complex that serves as a platform for IRF3 phosphorylation and subsequent innate immune response activation through the cGAS-STING pathway. This chain is X-ray repair cross-complementing protein 5 (XRCC5), found in Homo sapiens (Human).